The sequence spans 397 residues: 1-carboxy-3-chloro-3,4-dihydroxycyclo hexa-1,5-diene dehydrogenase (397 aa).

This sequence to P.putida PHT4.

The polypeptide is 1-carboxy-3-chloro-3,4-dihydroxycyclo hexa-1,5-diene dehydrogenase (cbaC) (Comamonas testosteroni (Pseudomonas testosteroni)).